The following is a 381-amino-acid chain: Glycerate kinase (381 aa).

This sequence belongs to the glycerate kinase type-1 family.

It catalyses the reaction (R)-glycerate + ATP = (2R)-3-phosphoglycerate + ADP + H(+). In Bacillus cereus (strain ATCC 10987 / NRS 248), this protein is Glycerate kinase (glxK).